Here is a 131-residue protein sequence, read N- to C-terminus: Small ribosomal subunit protein uS8 (131 aa).

Belongs to the universal ribosomal protein uS8 family. Part of the 30S ribosomal subunit. Contacts proteins S5 and S12.

One of the primary rRNA binding proteins, it binds directly to 16S rRNA central domain where it helps coordinate assembly of the platform of the 30S subunit. This chain is Small ribosomal subunit protein uS8, found in Acholeplasma laidlawii (strain PG-8A).